We begin with the raw amino-acid sequence, 62 residues long: Defensin-like protein A (62 aa).

Positions 1-26 are cleaved as a signal peptide; it reads MRCVVLFMVSCLLIVLLINHFEEVEA. The cysteines at positions 42 and 52 are disulfide-linked.

This sequence belongs to the DEFL family.

The protein localises to the secreted. Its function is as follows. Truncated and inactivated form of SCRA, a protein involved in male-mediated self-incompatibility when active. Most A.thaliana cultivars contain such an inactive form and thus, are self-fertiles. The protein is Defensin-like protein A (SCRA) of Arabidopsis thaliana (Mouse-ear cress).